A 264-amino-acid polypeptide reads, in one-letter code: MKLAFLCLCFISIAAAWPVSKSRQHAISASSEEKYDPRSHHTHRYHQDHVDSQSQEHLQQTQNDLASLQQTHYSSEENADVPEQPDFPDIPSKSQEAVDDDDDDDNDSNDTDESDEVVTDFPTEAPVTPFNRGDNAGRGDSVAYGFRAKAHVVKASKLRKAARKLIEDDATAEVGDSQLAGLWLPKESREQDSRELAQHQSVENDSRPRFDSPEVGGGDSKASAGVDSRESLASRSAVDTSNQTLESAEDAEDRHSIENNEVTR.

The N-terminal stretch at 1–16 (MKLAFLCLCFISIAAA) is a signal peptide. Disordered stretches follow at residues 21 to 141 (KSRQ…RGDS) and 166 to 264 (IEDD…EVTR). Positions 31 to 51 (SEEKYDPRSHHTHRYHQDHVD) are enriched in basic and acidic residues. Residues 52–73 (SQSQEHLQQTQNDLASLQQTHY) show a composition bias toward polar residues. Positions 97 to 118 (AVDDDDDDDNDSNDTDESDEVV) are enriched in acidic residues. N-linked (GlcNAc...) asparagine glycosylation is found at Asn-106 and Asn-109. Residues 132-134 (RGD) carry the Cell attachment site motif. The segment covering 186 to 212 (KESREQDSRELAQHQSVENDSRPRFDS) has biased composition (basic and acidic residues). 2 N-linked (GlcNAc...) asparagine glycosylation sites follow: Asn-204 and Asn-242. Over residues 233–246 (ASRSAVDTSNQTLE) the composition is skewed to polar residues. Positions 252–264 (EDRHSIENNEVTR) are enriched in basic and acidic residues.

Belongs to the osteopontin family. In terms of processing, extensively phosphorylated on serine residues.

It is found in the secreted. Major non-collagenous bone protein that binds tightly to hydroxyapatite. Appears to form an integral part of the mineralized matrix. Probably important to cell-matrix interaction. Functionally, acts as a cytokine involved in enhancing production of interferon-gamma and interleukin-12 and reducing production of interleukin-10 and is essential in the pathway that leads to type I immunity. In Gallus gallus (Chicken), this protein is Osteopontin (SPP1).